Reading from the N-terminus, the 270-residue chain is Meiotic recombination 1 protein (270 aa).

The KH domain occupies 191 to 225; it reads EIKLNKTQITFLIGAKGTRIESLREKSGASIKIIP.

In terms of biological role, required for chromosome pairing and genetic recombination. MER1 may function to bring the axial elements of the synaptonemal complex corresponding to homologous chromosomes together by initiating recombination. MER1 might be responsible for regulating the MER2 gene and/or gene product. The polypeptide is Meiotic recombination 1 protein (MER1) (Saccharomyces cerevisiae (strain ATCC 204508 / S288c) (Baker's yeast)).